Consider the following 145-residue polypeptide: Deoxyuridine 5'-triphosphate nucleotidohydrolase (145 aa).

Residues 64 to 66 (RSG), Asn-77, 81 to 83 (TID), and Met-91 contribute to the substrate site.

It belongs to the dUTPase family. Requires Mg(2+) as cofactor.

It carries out the reaction dUTP + H2O = dUMP + diphosphate + H(+). Its pathway is pyrimidine metabolism; dUMP biosynthesis; dUMP from dCTP (dUTP route): step 2/2. This enzyme is involved in nucleotide metabolism: it produces dUMP, the immediate precursor of thymidine nucleotides and it decreases the intracellular concentration of dUTP so that uracil cannot be incorporated into DNA. This is Deoxyuridine 5'-triphosphate nucleotidohydrolase from Leptospira interrogans serogroup Icterohaemorrhagiae serovar copenhageni (strain Fiocruz L1-130).